A 322-amino-acid polypeptide reads, in one-letter code: Nucleoprotein (322 aa).

Positions 43, 46, 76, 122, 240, and 269 each coordinate RNA.

This sequence belongs to the tenuiviruses nucleocapsid protein family.

Its subcellular location is the virion. It localises to the host cytoplasm. Encapsidates the genome, protecting it from nucleases. The encapsidated genomic RNA is termed the nucleocapsid (NC), and serves as template for viral transcription and replication. The sequence is that of Nucleoprotein from Avena sativa (Oat).